Reading from the N-terminus, the 493-residue chain is 5'-3' exonuclease PLD3 (493 aa).

Residues 1–37 lie on the Cytoplasmic side of the membrane; it reads MSSKVEYKPIQPHEEAENHFLQHELHKVKARKYYRCA. The chain crosses the membrane as a helical; Signal-anchor for type II membrane protein span at residues 38 to 58; that stretch reads LVVAIIITLVFCILASQLLLF. The Lumenal segment spans residues 59-493; it reads PFLSITSQTT…LSSWKEKCIF (435 aa). Residue asparagine 99 is glycosylated (N-linked (GlcNAc...) asparagine). The PLD phosphodiesterase 1 domain occupies 197–224; that stretch reads TDGILHTKFWVVDNEHFYIGSANMDWRS. Catalysis depends on residues histidine 202, lysine 204, and aspartate 209. Asparagine 237, asparagine 259, asparagine 269, asparagine 285, and asparagine 388 each carry an N-linked (GlcNAc...) asparagine glycan. The PLD phosphodiesterase 2 domain occupies 412–438; sequence YARVNHNKYMVTDRVAYIGTSNWSGDY. Residues histidine 417, lysine 419, and aspartate 424 contribute to the active site. N-linked (GlcNAc...) asparagine glycosylation is found at asparagine 433, asparagine 450, and asparagine 476.

The protein belongs to the phospholipase D family. In terms of processing, N-glycosylated. Proteolytically processed to a soluble form that is stable within endosomes and lysosomes. During transport through the secretory pathway becomes proteolysed by cysteine proteases, thereby releasing a stable soluble lysosomal lumenal polypeptide, whereas the transmembrane-bound fragment is rapidly degraded. Its transport route to lysosomes involves ubiquitination and the ESCRT complex. Post-translationally, ubiquitinated. Ubiquitination mediates sorting into lysosomes.

The protein resides in the endoplasmic reticulum membrane. The protein localises to the lysosome lumen. It is found in the early endosome membrane. Its subcellular location is the late endosome membrane. It localises to the golgi apparatus membrane. The protein resides in the endosome membrane. It catalyses the reaction Exonucleolytic cleavage in the 5'- to 3'-direction to yield nucleoside 3'-phosphates.. Functionally, 5'-&gt;3' DNA exonuclease which digests single-stranded DNA (ssDNA). Regulates inflammatory cytokine responses via the degradation of nucleic acids, by reducing the concentration of ssDNA able to stimulate TLR9, a nucleotide-sensing receptor in collaboration with PLD4. May be important in myotube formation. Plays a role in lysosomal homeostasis. Involved in the regulation of endosomal protein sorting. The sequence is that of 5'-3' exonuclease PLD3 (pld3) from Xenopus laevis (African clawed frog).